The sequence spans 276 residues: Type 2 phosphatidylinositol 4,5-bisphosphate 4-phosphatase (276 aa).

Basic and acidic residues predominate over residues 1–10 (MAADGIDERS). Positions 1–27 (MAADGIDERSPLISPSSGNVTPTAPPY) are disordered. The segment covering 13 to 27 (ISPSSGNVTPTAPPY) has biased composition (polar residues). Residue cysteine 106 is part of the active site. Positions 106–112 (CKDISRR) match the CX5R motif motif. The next 2 membrane-spanning stretches (helical) occupy residues 211 to 231 (CCTYITMGMICIFIGVGLTVG) and 246 to 266 (WAVAYLVGLVCLIRACYWGAI).

It is found in the late endosome membrane. It localises to the lysosome membrane. It carries out the reaction a 1,2-diacyl-sn-glycero-3-phospho-(1D-myo-inositol-4,5-bisphosphate) + H2O = a 1,2-diacyl-sn-glycero-3-phospho-(1D-myo-inositol-5-phosphate) + phosphate. Functionally, catalyzes the hydrolysis of phosphatidylinositol-4,5-bisphosphate (PtdIns-4,5-P2) to phosphatidylinositol-4-phosphate (PtdIns-4-P). The protein is Type 2 phosphatidylinositol 4,5-bisphosphate 4-phosphatase (pip4p2) of Xenopus tropicalis (Western clawed frog).